The sequence spans 101 residues: Small ribosomal subunit protein uS14 (101 aa).

This sequence belongs to the universal ribosomal protein uS14 family. As to quaternary structure, part of the 30S ribosomal subunit. Contacts proteins S3 and S10.

In terms of biological role, binds 16S rRNA, required for the assembly of 30S particles and may also be responsible for determining the conformation of the 16S rRNA at the A site. The polypeptide is Small ribosomal subunit protein uS14 (Aromatoleum aromaticum (strain DSM 19018 / LMG 30748 / EbN1) (Azoarcus sp. (strain EbN1))).